Here is a 157-residue protein sequence, read N- to C-terminus: Iron-sulfur cluster repair protein DnrN (157 aa).

Belongs to the RIC family.

It is found in the cytoplasm. Functionally, di-iron-containing protein involved in the repair of iron-sulfur clusters damaged by oxidative and nitrosative stress conditions. Required to repair damage caused by nitric oxide to FNR and NsrR transcription factors. This chain is Iron-sulfur cluster repair protein DnrN (dnrN), found in Neisseria gonorrhoeae.